The chain runs to 79 residues: UPF0180 protein BcerKBAB4_1316 (79 aa).

Belongs to the UPF0180 family.

In Bacillus mycoides (strain KBAB4) (Bacillus weihenstephanensis), this protein is UPF0180 protein BcerKBAB4_1316.